We begin with the raw amino-acid sequence, 124 residues long: Fluoride-specific ion channel FluC (124 aa).

Helical transmembrane passes span 1 to 21 (MFNLLLVVVGGGIGAGIRHLT), 35 to 55 (WGTMAINIVGSFAMGLFIAIL), 66 to 86 (LFVATGIFGGFTTFSAFSLDF), and 99 to 119 (FGYALASVIGAIIALFLGLWL). Na(+) is bound by residues G74 and T77.

Belongs to the fluoride channel Fluc/FEX (TC 1.A.43) family.

Its subcellular location is the cell inner membrane. The enzyme catalyses fluoride(in) = fluoride(out). With respect to regulation, na(+) is not transported, but it plays an essential structural role and its presence is essential for fluoride channel function. Fluoride-specific ion channel. Important for reducing fluoride concentration in the cell, thus reducing its toxicity. The chain is Fluoride-specific ion channel FluC from Mesorhizobium japonicum (strain LMG 29417 / CECT 9101 / MAFF 303099) (Mesorhizobium loti (strain MAFF 303099)).